Here is a 186-residue protein sequence, read N- to C-terminus: UPF0157 protein SCO7215 (186 aa).

The protein belongs to the UPF0157 (GrpB) family.

This chain is UPF0157 protein SCO7215, found in Streptomyces coelicolor (strain ATCC BAA-471 / A3(2) / M145).